We begin with the raw amino-acid sequence, 491 residues long: GTPase Der (491 aa).

2 consecutive EngA-type G domains span residues 54–217 and 229–402; these read PVLA…PEYS and RRIA…ESWD. GTP is bound by residues 60 to 67, 107 to 111, 169 to 172, 235 to 242, 282 to 286, and 347 to 350; these read GRPNVGKS, DTGGW, NKVD, DTAGI, and NKWD. A KH-like domain is found at 403–485; the sequence is RRIPTGRLNA…PIEVNMRVRE (83 aa).

This sequence belongs to the TRAFAC class TrmE-Era-EngA-EngB-Septin-like GTPase superfamily. EngA (Der) GTPase family. In terms of assembly, associates with the 50S ribosomal subunit.

Its function is as follows. GTPase that plays an essential role in the late steps of ribosome biogenesis. This chain is GTPase Der, found in Paenarthrobacter aurescens (strain TC1).